We begin with the raw amino-acid sequence, 536 residues long: Zinc finger protein 623 (536 aa).

Residues 57–77 (GELLGNPEGQSLGSSPSQDRG) form a disordered region. The segment covering 64–74 (EGQSLGSSPSQ) has biased composition (polar residues). 13 consecutive C2H2-type zinc fingers follow at residues 123 to 145 (NPCDICGKTFTFNSDLVRHRISH), 151 to 173 (YTCDQCGKGFGQSSHLMEHQRIH), 179 to 201 (YVCNVCGKDFIHYSGLIEHQRVH), 207 to 229 (FKCAQCGKAFCHSSDLIRHQRVH), 235 to 257 (FECKECGKGFSQSSLLIRHQRIH), 263 to 285 (YECNECGKSFIRSSSLIRHYQIH), 291 to 313 (YECKECGKAFRHRSDLIEHQRIH), 319 to 341 (FECNECGKAFIRSSKLIQHQRIH), 347 to 369 (YVCNECGKRFSQTSNFTQHQRIH), 375 to 397 (YECNECGKAFFLSSYLIRHQKIH), 403 to 425 (YECKECGKAFLQKAHLTEHQKIH), 431 to 453 (FECKDCGKAFIQSSKLLLHQIIH), and 459 to 481 (YVCSYCGKGFIQRSNFLQHQKIH). Lys-445 is covalently cross-linked (Glycyl lysine isopeptide (Lys-Gly) (interchain with G-Cter in SUMO2)). Positions 513–536 (LSLSKAPIHLGERSVDKGEHTGNL) are disordered. Residues 522–536 (LGERSVDKGEHTGNL) are compositionally biased toward basic and acidic residues.

This sequence belongs to the krueppel C2H2-type zinc-finger protein family.

The protein resides in the nucleus. In terms of biological role, may be involved in transcriptional regulation. This Homo sapiens (Human) protein is Zinc finger protein 623 (ZNF623).